Consider the following 220-residue polypeptide: Deep-sea actinoporin Cjtox I (220 aa).

An N-terminal signal peptide occupies residues 1–19 (MNRLIILCLVAATIYSTIA). A propeptide spanning residues 20 to 42 (LPMKEDISNEERPTSVNEKPVKK) is cleaved from the precursor. Positions 96, 128, 146, 148, 174, 178, and 179 each coordinate phosphocholine. A trp-rich region, which is important for the binding to lipid membrane region spans residues 146-161 (SVPYDYNWYSNWWNIK). Positions 185–187 (KGN) match the Cell attachment site, crucial for protein stability motif.

It belongs to the actinoporin family. Sea anemone subfamily. As to quaternary structure, octamer or nonamer in membranes. Monomer in the soluble state. As to expression, expressed in tentacles.

The protein resides in the secreted. Its subcellular location is the nematocyst. It localises to the target cell membrane. Functionally, probably acts in predation. Pore-forming protein that forms cations-selective hydrophilic pores of around 1 nm and causes cytolysis. Pore formation is a multi-step process that involves specific recognition of membrane sphingomyelin (but neither cholesterol nor phosphatidylcholine) using aromatic rich region and adjacent phosphocholine (POC) binding site, firm binding to the membrane (mainly driven by hydrophobic interactions) accompanied by the transfer of the N-terminal region to the lipid-water interface and finally pore formation after oligomerization of monomers. Shows hemolytic activity on equine erythrocytes. Hemolysis is moderately inhibited in presence of sphingomyelin, suggesting that this protein targets sphingomyelin. The chain is Deep-sea actinoporin Cjtox I from Cribrinopsis japonica (Deep-sea anemone).